The primary structure comprises 318 residues: NADH-ubiquinone oxidoreductase chain 1 (318 aa).

Helical transmembrane passes span 2–22 (FFIN…FLTL), 70–90 (MFIL…IPLP), 100–120 (LGVL…LWSG), 147–167 (AIIL…TLII), 171–191 (HMWL…STLA), 223–243 (FFLA…ILFF), 253–273 (ELYS…FLWI), and 294–314 (LPLT…TASI).

It belongs to the complex I subunit 1 family. In terms of assembly, core subunit of respiratory chain NADH dehydrogenase (Complex I) which is composed of 45 different subunits.

It is found in the mitochondrion inner membrane. It carries out the reaction a ubiquinone + NADH + 5 H(+)(in) = a ubiquinol + NAD(+) + 4 H(+)(out). Core subunit of the mitochondrial membrane respiratory chain NADH dehydrogenase (Complex I) which catalyzes electron transfer from NADH through the respiratory chain, using ubiquinone as an electron acceptor. Essential for the catalytic activity and assembly of complex I. In Canis lupus familiaris (Dog), this protein is NADH-ubiquinone oxidoreductase chain 1 (MT-ND1).